Reading from the N-terminus, the 308-residue chain is Elongation factor Ts (308 aa).

The segment at 79–82 (TDFV) is involved in Mg(2+) ion dislocation from EF-Tu.

The protein belongs to the EF-Ts family.

Its subcellular location is the cytoplasm. Functionally, associates with the EF-Tu.GDP complex and induces the exchange of GDP to GTP. It remains bound to the aminoacyl-tRNA.EF-Tu.GTP complex up to the GTP hydrolysis stage on the ribosome. The polypeptide is Elongation factor Ts (Bdellovibrio bacteriovorus (strain ATCC 15356 / DSM 50701 / NCIMB 9529 / HD100)).